Consider the following 429-residue polypeptide: Patatin-like phospholipase domain-containing protein 5 (429 aa).

In terms of domain architecture, PNPLA spans 12–181 (LSFSGAGYLG…SNNLPFADCP (170 aa)). The GXGXXG signature appears at 16–21 (GAGYLG). Residues 47–51 (GSSSG) carry the GXSXG motif. The active-site Nucleophile is the Ser-49. Asp-168 functions as the Proton acceptor in the catalytic mechanism. A DGA/G motif is present at residues 168–170 (DGA).

In terms of tissue distribution, expressed in brain and pituitary gland.

The catalysed reaction is a triacylglycerol + H2O = a diacylglycerol + a fatty acid + H(+). In terms of biological role, has abundant triacylglycerol lipase activity. The polypeptide is Patatin-like phospholipase domain-containing protein 5 (Homo sapiens (Human)).